The sequence spans 218 residues: Protein Syd (218 aa).

Belongs to the Syd family.

The protein localises to the cell inner membrane. In terms of biological role, interacts with the SecY protein in vivo. May bind preferentially to an uncomplexed state of SecY, thus functioning either as a chelating agent for excess SecY in the cell or as a regulatory factor that negatively controls the translocase function. This is Protein Syd from Shewanella denitrificans (strain OS217 / ATCC BAA-1090 / DSM 15013).